The sequence spans 221 residues: UPF0319 protein NTHI1987 (221 aa).

The first 21 residues, 1–21, serve as a signal peptide directing secretion; that stretch reads MKLRAVVLGLATLCTSTATFA.

It belongs to the UPF0319 family.

The polypeptide is UPF0319 protein NTHI1987 (Haemophilus influenzae (strain 86-028NP)).